The primary structure comprises 387 residues: Small ribosomal subunit protein uS5m (387 aa).

A mitochondrion-targeting transit peptide spans 1–22; it reads MLRSFSHFLQIGSRRQPTYFRC. The segment at 33 to 87 is disordered; it reads FKNDPKKELNSNLNEKSVEESSKNETKEQFNSSSIPRESESEGKTASNTSPLSPK. Basic and acidic residues predominate over residues 48–60; it reads KSVEESSKNETKE. A Phosphoserine modification is found at Ser85. In terms of domain architecture, S5 DRBM spans 225–288; that stretch reads LMFVPLVRRR…GRAVKNMVYI (64 aa).

This sequence belongs to the universal ribosomal protein uS5 family. In terms of assembly, component of the mitochondrial small ribosomal subunit (mt-SSU). Mature yeast 74S mitochondrial ribosomes consist of a small (37S) and a large (54S) subunit. The 37S small subunit contains a 15S ribosomal RNA (15S mt-rRNA) and at least 32 different proteins. The 54S large subunit contains a 21S rRNA (21S mt-rRNA) and at least 45 different proteins. uS3m, uS4m and uS5m form the narrow entry site of the mRNA channel.

It is found in the mitochondrion. In terms of biological role, component of the mitochondrial ribosome (mitoribosome), a dedicated translation machinery responsible for the synthesis of mitochondrial genome-encoded proteins, including at least some of the essential transmembrane subunits of the mitochondrial respiratory chain. The mitoribosomes are attached to the mitochondrial inner membrane and translation products are cotranslationally integrated into the membrane. The sequence is that of Small ribosomal subunit protein uS5m (mrp5) from Schizosaccharomyces pombe (strain 972 / ATCC 24843) (Fission yeast).